The chain runs to 175 residues: CEN-like protein 4 (175 aa).

It belongs to the phosphatidylethanolamine-binding protein family. Expressed in vegetative axillary meristems but not in the main shoot meristem.

It localises to the cytoplasm. Its function is as follows. May form complexes with phosphorylated ligands by interfering with kinases and their effectors. This chain is CEN-like protein 4 (CET4), found in Nicotiana tabacum (Common tobacco).